A 196-amino-acid chain; its full sequence is MSDERYQQRQQKVKDRVDARVAQAQEERGIIIVFTGNGKGKTTAAFGTAARAVGHGKNVGVVQFIKGTWPNGERNLLEPHGVEFQVMATGFTWETQNREADTAACMAVWQHGKRMLADPLLDMVVLDELTYMVAYDYLPLEEVISALNARPGHQTVIITGRGCHRDILDLADTVSELRPVKHAFDAGVKAQMGIDY.

An ATP-binding site is contributed by 36-42; sequence GNGKGKT.

This sequence belongs to the Cob(I)alamin adenosyltransferase family. In terms of assembly, homodimer.

Its subcellular location is the cytoplasm. The catalysed reaction is 2 cob(II)yrinate a,c diamide + reduced [electron-transfer flavoprotein] + 2 ATP = 2 adenosylcob(III)yrinate a,c-diamide + 2 triphosphate + oxidized [electron-transfer flavoprotein] + 3 H(+). It carries out the reaction 2 cob(II)alamin + reduced [electron-transfer flavoprotein] + 2 ATP = 2 adenosylcob(III)alamin + 2 triphosphate + oxidized [electron-transfer flavoprotein] + 3 H(+). It participates in cofactor biosynthesis; adenosylcobalamin biosynthesis; adenosylcobalamin from cob(II)yrinate a,c-diamide: step 2/7. Required for both de novo synthesis of the corrin ring for the assimilation of exogenous corrinoids. Participates in the adenosylation of a variety of incomplete and complete corrinoids. In Salmonella typhimurium (strain LT2 / SGSC1412 / ATCC 700720), this protein is Corrinoid adenosyltransferase CobA (btuR).